Here is a 927-residue protein sequence, read N- to C-terminus: MENYGWNYPYYPYRPPRPNPPYPAPPHHHGSMSHSGPLDHHHPPMSYYASFDYQHQPPPPYPPVSYYASFSSHSDLSYSGRLDSSGHGFTSTASPHSPGMHIVPFGKASLKVLLLHGNLDIWVSCANNLPNLDLFHKTLGVVFGGMTNMIEGQLSKKITSDPYVSISVAGAVIGRTYVISNSENPVWQQHFYVPVAHHAAEVHFVVKDSDAVGSQLIGIVTIPVEQIYSGARIEGTYSIRDSNGKPCKPGATLSLSIQYTSMNKLSVYHSGVGAGPYYQGVPGTYFPLREGGSVTLYQDAHVPEGMLPGIKLGNGMCYEHGKCWHDMFHAICQARRLIYITGWSVWHNVRLVRDKEDPSSECRLGELLRSKSQEGVRVLLLVWDDPTSQNILGYMTDGVMGTHDEETRRFFKDSSVQVLLCPRNAGKRHSWVKQREVGTIYTHHQKNLIVDADAGGNRRKIVAFVGGLDLCDGRYDTPQHPLFRTLQTDHNGDYHNPTFTGNVSGCPREPWHDLHSKIDGPAAYDVLTNFEERWLKAAKPHRINKLKTSYDDALLRIDRIPDILRVLDAPTVSANDPEAWHVQIFRSIDSNSVKGFPKDPKYATSKNLVCGKNVLIDMSIHTAYVKAIRAAQHFIYIENQYFIGSSYDWNAHKDIGANNLIPMEIALKIADKIRAKERFAAYIVIPMWPEGVPTGAATQRILYWQHKTMQMMYGTIYNALVEAGLEDEYSPQDYLNFFCLGNREMVNGNNESGTGSASNENTPQGLCRKSRRFMIYVHSKGMVVDDEYVVIGSANINQRSMEGTRDTEIAMGAYQPQHTWARRQSGPRGQIYGYRMSLWAEHMALLDDCFVEPESLGCVRKVRTVAEENWEQFRSEEVSEMRGHLMKYPVEVDRKGKVRPLPGSEEFPDVGGNVVGSFLAIQENLTI.

The region spanning 104 to 237 (PFGKASLKVL…YSGARIEGTY (134 aa)) is the C2 domain. D299 contributes to the Ca(2+) binding site. The PLD phosphodiesterase 1 domain occupies 439-474 (TIYTHHQKNLIVDADAGGNRRKIVAFVGGLDLCDGR). Catalysis depends on residues H444, K446, and D451. Position 444 (H444) interacts with a 1,2-diacyl-sn-glycero-3-phosphate. The Ca(2+) site is built by H480 and H512. Residues Q640 and H778 each coordinate a 1,2-diacyl-sn-glycero-3-phosphate. Residues 773-800 (FMIYVHSKGMVVDDEYVVIGSANINQRS) form the PLD phosphodiesterase 2 domain. Active-site residues include H778, K780, and D785. E841 serves as a coordination point for Ca(2+).

Belongs to the phospholipase D family. C2-PLD subfamily. Requires Ca(2+) as cofactor. Expressed in stems, and to a lower amount in leaves, flowers and siliques.

It is found in the cytoplasm. The protein localises to the membrane. The catalysed reaction is a 1,2-diacyl-sn-glycero-3-phosphocholine + H2O = a 1,2-diacyl-sn-glycero-3-phosphate + choline + H(+). With respect to regulation, inhibited by neomycin. Its function is as follows. Hydrolyzes glycerol-phospholipids at the terminal phosphodiesteric bond to generate phosphatidic acids (PA). Plays an important role in various cellular processes, including phytohormone action, vesicular trafficking, secretion, cytoskeletal arrangement, meiosis, tumor promotion, pathogenesis, membrane deterioration and senescence. Can use phosphatidylserine or N-acylphosphatidylethanolamine as substrates. This Arabidopsis thaliana (Mouse-ear cress) protein is Phospholipase D beta 2.